We begin with the raw amino-acid sequence, 131 residues long: Global transcriptional regulator Spx (131 aa).

Cys-10 and Cys-13 are oxidised to a cystine.

The protein belongs to the ArsC family. Spx subfamily. Interacts with the C-terminal domain of the alpha subunit of the RNAP.

It is found in the cytoplasm. Functionally, global transcriptional regulator that plays a key role in stress response and exerts either positive or negative regulation of genes. Acts by interacting with the C-terminal domain of the alpha subunit of the RNA polymerase (RNAP). This interaction can enhance binding of RNAP to the promoter region of target genes and stimulate their transcription, or block interaction of RNAP with activator. The sequence is that of Global transcriptional regulator Spx from Shouchella clausii (strain KSM-K16) (Alkalihalobacillus clausii).